A 142-amino-acid chain; its full sequence is Large ribosomal subunit protein uL13 (142 aa).

Belongs to the universal ribosomal protein uL13 family. In terms of assembly, part of the 50S ribosomal subunit.

In terms of biological role, this protein is one of the early assembly proteins of the 50S ribosomal subunit, although it is not seen to bind rRNA by itself. It is important during the early stages of 50S assembly. The polypeptide is Large ribosomal subunit protein uL13 (Bordetella petrii (strain ATCC BAA-461 / DSM 12804 / CCUG 43448)).